The following is a 449-amino-acid chain: MKSAVETLSPTRVKFTVEVGFDELQPTVAAAYRKVAEQVRVPGFRPGKVPPPIIDRRIGRGVVLEQALNDAIPQFYGQAVDEAAVAVISQPEIEVTNFADGEGLTFTAEVDVRPTIELPDPESITVTVDPVTVSDADVDAELAALADRFATLKPVDRPARRGDFVTIDMTVRLDGEVLEDGTVTGASYEVGSAQLVEGLDEALEGLTAGQSAEFDAPLAGPYAGRTARAEVTVRAVREKQVPALDDAFAQQASEFDTLEELRAHIRERIGRTRRIQQHVQARERLLQTLLDSLDIPVPERIVDAEVRSRAEQLRRYAEARGMDAEGLLAQQGESLHDHEAHVRADVERELRVQFLLDTVVAREQLQLQEAELTDYLIQRATRLGVSPDDYANQLVRTNTVPLAVADALRGKALTYLLQRVRVVDTTGAPVNLEGGSTPAAEAEPAVSEA.

Residues 162-242 (GDFVTIDMTV…VRAVREKQVP (81 aa)) enclose the PPIase FKBP-type domain. The segment at 428-449 (APVNLEGGSTPAAEAEPAVSEA) is disordered. Positions 438–449 (PAAEAEPAVSEA) are enriched in low complexity.

This sequence belongs to the FKBP-type PPIase family. Tig subfamily.

The protein localises to the cytoplasm. The enzyme catalyses [protein]-peptidylproline (omega=180) = [protein]-peptidylproline (omega=0). Involved in protein export. Acts as a chaperone by maintaining the newly synthesized protein in an open conformation. Functions as a peptidyl-prolyl cis-trans isomerase. In Acidothermus cellulolyticus (strain ATCC 43068 / DSM 8971 / 11B), this protein is Trigger factor.